The primary structure comprises 654 residues: Acetyl-coenzyme A synthetase (654 aa).

CoA-binding positions include 191–194 and T315; that span reads RRGQ. ATP contacts are provided by residues 391–393, 415–420, D506, and R521; these read GEP and DTWWQT. S529 contacts CoA. Residue R532 participates in ATP binding. Mg(2+) is bound by residues V543, H545, and V548. K615 bears the N6-acetyllysine mark.

The protein belongs to the ATP-dependent AMP-binding enzyme family. Requires Mg(2+) as cofactor. Post-translationally, acetylated. Deacetylation by the SIR2-homolog deacetylase activates the enzyme.

It carries out the reaction acetate + ATP + CoA = acetyl-CoA + AMP + diphosphate. Its function is as follows. Catalyzes the conversion of acetate into acetyl-CoA (AcCoA), an essential intermediate at the junction of anabolic and catabolic pathways. AcsA undergoes a two-step reaction. In the first half reaction, AcsA combines acetate with ATP to form acetyl-adenylate (AcAMP) intermediate. In the second half reaction, it can then transfer the acetyl group from AcAMP to the sulfhydryl group of CoA, forming the product AcCoA. This chain is Acetyl-coenzyme A synthetase, found in Gemmatimonas aurantiaca (strain DSM 14586 / JCM 11422 / NBRC 100505 / T-27).